Reading from the N-terminus, the 281-residue chain is Nucleotide-binding protein MADE_1004170 (281 aa).

Residue 8 to 15 (GRSGSGKS) participates in ATP binding. GTP is bound at residue 56–59 (DVRN).

Belongs to the RapZ-like family.

Its function is as follows. Displays ATPase and GTPase activities. In Alteromonas mediterranea (strain DSM 17117 / CIP 110805 / LMG 28347 / Deep ecotype), this protein is Nucleotide-binding protein MADE_1004170.